A 109-amino-acid chain; its full sequence is Flowering-promoting factor 1-like protein 1 (109 aa).

A D-box motif is present at residues 73–81 (RGSLDLISL).

It belongs to the FPF1 family. In terms of assembly, interacts with RPT4. In terms of processing, ubiquitinated. RPT4 mediates its proteasome-dependent degradation. Specifically expressed in the apical meristem, the elongation zone of root tip, steles of the branch zone, and the young lateral root. Also expressed in spikes. Expressed in roots and spikes (at protein level).

The protein localises to the cytoplasm. The protein resides in the nucleus. GTP-binding protein that functions in the development of root systems, which are mediated by auxin. Acts as a cell cycle regulator during root development. Proteasome-mediated degradation of the protein is necessary for the transition of metaphase to anaphase in mitosis. The sequence is that of Flowering-promoting factor 1-like protein 1 (RAA1) from Oryza sativa subsp. japonica (Rice).